The following is a 442-amino-acid chain: Inner membrane protein PPF-1, chloroplastic (442 aa).

Over methionine 1–glycine 108 the chain is Lumenal. A helical transmembrane segment spans residues leucine 109–valine 129. At lysine 130–proline 183 the chain is on the stromal side. Residues leucine 184–leucine 204 traverse the membrane as a helical segment. The Lumenal portion of the chain corresponds to serine 205 to phenylalanine 296. A helical transmembrane segment spans residues leucine 297 to phenylalanine 317. Over threonine 318 to alanine 442 the chain is Stromal. 2 disordered regions span residues alanine 350 to lysine 371 and proline 390 to alanine 442. A compositionally biased stretch (basic and acidic residues) spans serine 358 to lysine 371. Polar residues predominate over residues glutamate 414–phenylalanine 427. Residues arginine 431 to alanine 442 show a composition bias toward basic residues.

The protein belongs to the OXA1/ALB3/YidC (TC 2.A.9.2) family. In terms of tissue distribution, highly expressed in apical buds. Low levels of expression in leaves. Not expressed in roots, and stems.

It localises to the plastid. The protein localises to the chloroplast thylakoid membrane. May be required for the insertion of some integral membrane proteins into the chloroplast thylakoid membrane. May play a role in inhibiting senescence. The protein is Inner membrane protein PPF-1, chloroplastic (PPF-1) of Pisum sativum (Garden pea).